Consider the following 256-residue polypeptide: Nuclear shuttle protein (256 aa).

The tract at residues 18 to 50 (VSRNQSSKRGTFVRRTDGKRRKGPSSKAHDEPK) is disordered. The Bipartite nuclear localization signal signature appears at 21-42 (NQSSKRGTFVRRTDGKRRKGPS). A Nuclear localization signal motif is present at residues 81 to 96 (VLGKIEPNRSRSYIKL). Residues 150–187 (EIFGARIHSHGNLAITPGLKDRYYVLHVLKRVLSVEKD) form an interaction with Arabidopsis thaliana NSI protein region.

It belongs to the begomovirus nuclear shuttle protein family. As to quaternary structure, binds to single-stranded and double-stranded viral DNA. Interacts with the host nuclear shuttle interacting (NSI) protein. This interaction may allow NSP to recruit NSI monomers to the viral genome and thus regulate nuclear export of viral genome by NSP.

The protein localises to the host nucleus. Its subcellular location is the host cytoplasm. It is found in the host cell membrane. Its function is as follows. Binds to the genomic viral ssDNA, shuttles it into and out of the cell nucleus. Begomoviruses use 2 proteins to transport their DNA from cell to cell. The nuclear shuttle protein (NSP) shuttles it between nucleus and cytoplasm and the movement protein (MP) probably transports the DNA-NSP complex to the cell periphery and facilitates movement across the cell wall. The sequence is that of Nuclear shuttle protein from Brassica oleracea (Wild cabbage).